The primary structure comprises 760 residues: MKFNYPETRRDDSVFDIFKSTEKGSVKVYDPYRHLEDQQSPETKKWVDEENKITRSFLDQDNTSEKISNEIMKMLNFERFDWFRRRGSKLFFSRNPNTLNQNIIYLIDIDQISISKDGKSSAKGFENAIEFLNPNTYSKDGTWSLKSFVISKSGDHVCFSYSKAGSDWEEIAVKKIITTNELKTNKDDEEEKEDLKKKNCLHYAVVDLPDSINWCKFTSIKWDENETGFIYNRYPKPEKVSDDDKGTETDTNLNNKVYYHKLGDANESFDRVVFECPENPQWIFGTEFSHDHSSLFISAFRDCNVEHNLYVIRNFQEAIANKSAFKVEALIDNFDACYYYITNTKQGEYFFLTNLSAPFNRLISIQLNDDQPIVPNSKSKLEFKEIIPEKDYVLESVSRSSQEKFYVSYQKHVQDIIEVYDFNGKYLKDIKLPGPGSASLSATEYHDHIFINFSNLVSPSVTYYMDSKNDELLLFKEPHIEGFKSSDYECKQVFYESPKDKTKIPMFIAYKKTTDITSGNAPTYMTGYGGFNISYTQSFSIRNIYFLNKFNGIFVIANIRGGGEYGKAWHEAGSKKNKQNCFDDFIGAAEYLIKENYTNQNKLAVRGGSNGGLLMGAISNQRPDLFKCVVADVGVMDMLRFHLHTIGSNWVSDYGRSDNPDDFDVLIKYSPLNNVPKDSNQYPSIMLCTGDHDDRVIPAHSYKFISELQYQLGKKVDTPLLIRVDKDSGHGAGKGLSKQNNEIADIFNFFSKVLNVKLNF.

Active-site charge relay system residues include S609, D693, and H730.

Belongs to the peptidase S9A family.

It localises to the cytoplasm. The catalysed reaction is Hydrolysis of Pro-|-Xaa &gt;&gt; Ala-|-Xaa in oligopeptides.. Inhibited by chymostatin, Boc-Glu(NHO-Bz)-Pyrrolidide, Z-Pro-L-prolinal dimethyacetal and the peptide H-H-L-P-P-P-V-OH. Its function is as follows. Cleaves peptide bonds on the C-terminal side of prolyl residues within peptides that are up to approximately 30 amino acids long. The sequence is that of Prolyl endopeptidase (prep) from Dictyostelium discoideum (Social amoeba).